Here is a 122-residue protein sequence, read N- to C-terminus: Large ribosomal subunit protein uL14 (122 aa).

The protein belongs to the universal ribosomal protein uL14 family. As to quaternary structure, part of the 50S ribosomal subunit. Forms a cluster with proteins L3 and L19. In the 70S ribosome, L14 and L19 interact and together make contacts with the 16S rRNA in bridges B5 and B8.

In terms of biological role, binds to 23S rRNA. Forms part of two intersubunit bridges in the 70S ribosome. The polypeptide is Large ribosomal subunit protein uL14 (Staphylococcus carnosus (strain TM300)).